The following is a 332-amino-acid chain: Anthranilate phosphoribosyltransferase (332 aa).

Residues glycine 79, 82-83, serine 87, 89-92, 107-115, and serine 119 contribute to the 5-phospho-alpha-D-ribose 1-diphosphate site; these read GD, NIST, and KHGNRSVSS. Anthranilate is bound at residue glycine 79. Serine 91 is a Mg(2+) binding site. Residue asparagine 110 coordinates anthranilate. An anthranilate-binding site is contributed by arginine 165. Mg(2+) contacts are provided by aspartate 223 and glutamate 224.

It belongs to the anthranilate phosphoribosyltransferase family. As to quaternary structure, homodimer. Requires Mg(2+) as cofactor.

It catalyses the reaction N-(5-phospho-beta-D-ribosyl)anthranilate + diphosphate = 5-phospho-alpha-D-ribose 1-diphosphate + anthranilate. It functions in the pathway amino-acid biosynthesis; L-tryptophan biosynthesis; L-tryptophan from chorismate: step 2/5. In terms of biological role, catalyzes the transfer of the phosphoribosyl group of 5-phosphorylribose-1-pyrophosphate (PRPP) to anthranilate to yield N-(5'-phosphoribosyl)-anthranilate (PRA). The sequence is that of Anthranilate phosphoribosyltransferase from Yersinia pestis bv. Antiqua (strain Antiqua).